Here is a 186-residue protein sequence, read N- to C-terminus: Serine hydrolase RBBP9 (186 aa).

Residues 56-70 (LPFMETELHCDEKTI) are retinoblastoma protein binding. The segment at 63-67 (LHCDE) is involved in binding to RB1. Residues serine 75, aspartate 138, and histidine 165 each act as charge relay system in the active site.

This sequence belongs to the RBBP9 family. In terms of assembly, interacts with RB1; the interaction disrupts RB1 binding to E2F1. Interacts with RBL1 and RBL2. Expressed in spleen.

The catalysed reaction is valacyclovir + H2O = acyclovir + L-valine + H(+). Serine hydrolase. Catalyzes the hydrolytic activation of amino acid ester of the antiviral prodrug valacyclovir to its corresponding active drug, acyclovir. May negatively regulate basal or autocrine TGF-beta signaling by suppressing SMAD2-SMAD3 phosphorylation. May play a role in the transformation process due to its capacity to confer resistance to the growth-inhibitory effects of TGF-beta through interaction with RB1 and the subsequent displacement of E2F1. The sequence is that of Serine hydrolase RBBP9 (Rbbp9) from Mus musculus (Mouse).